Reading from the N-terminus, the 172-residue chain is Large ribosomal subunit protein uL10 (172 aa).

This sequence belongs to the universal ribosomal protein uL10 family. As to quaternary structure, part of the ribosomal stalk of the 50S ribosomal subunit. The N-terminus interacts with L11 and the large rRNA to form the base of the stalk. The C-terminus forms an elongated spine to which L12 dimers bind in a sequential fashion forming a multimeric L10(L12)X complex.

In terms of biological role, forms part of the ribosomal stalk, playing a central role in the interaction of the ribosome with GTP-bound translation factors. This Pelodictyon phaeoclathratiforme (strain DSM 5477 / BU-1) protein is Large ribosomal subunit protein uL10.